The following is a 25-amino-acid chain: Small ribosomal subunit protein eS32 (25 aa).

Residues 1-25 (MRAKWRKKRVRRLKRKRRKVRARSK) form a disordered region.

This sequence belongs to the eukaryotic ribosomal protein eS32 family. As to quaternary structure, component of the small ribosomal subunit.

This is Small ribosomal subunit protein eS32 (RPL41) from Eremothecium gossypii (strain ATCC 10895 / CBS 109.51 / FGSC 9923 / NRRL Y-1056) (Yeast).